Consider the following 86-residue polypeptide: Neurotoxin-like protein pMD18-NTL3 (86 aa).

Positions M1–T21 are cleaved as a signal peptide. 4 cysteine pairs are disulfide-bonded: C24–C45, C38–C62, C66–C78, and C79–C84.

It belongs to the three-finger toxin family. Short-chain subfamily. Orphan group IX sub-subfamily. In terms of tissue distribution, expressed by the venom gland.

Its subcellular location is the secreted. In Bungarus multicinctus (Many-banded krait), this protein is Neurotoxin-like protein pMD18-NTL3.